Reading from the N-terminus, the 198-residue chain is MSVSPQLAQLATWMAGHFNNLHQAIAEPVWFANIHVYQCPLPWSVFQGIGFYVEQLYDIYPDQPYRQRVIHLFETPDGIRIQNYALGSPEAYKCAGRDLGKLASLAAAELELLPGCAVQVEWTGSCYRGRSVPGKGCIVERKGRTTYLYSEFEIGADYFHSLDQGRDPETDQVVWGSLSGPFRFVKKQDFSCYLPRWS.

It belongs to the CpcT/CpeT biliprotein lyase family.

Covalently attaches a chromophore to Cys residue(s) of phycobiliproteins. The protein is Chromophore lyase CpcT/CpeT 3 of Synechococcus sp. (strain JA-3-3Ab) (Cyanobacteria bacterium Yellowstone A-Prime).